The chain runs to 138 residues: Large ribosomal subunit protein uL16c (138 aa).

The protein belongs to the universal ribosomal protein uL16 family. Part of the 50S ribosomal subunit.

The protein resides in the plastid. The protein localises to the chloroplast. The sequence is that of Large ribosomal subunit protein uL16c from Physcomitrium patens (Spreading-leaved earth moss).